A 242-amino-acid polypeptide reads, in one-letter code: Type III pantothenate kinase (242 aa).

7-14 (DLGNSRFK) contacts ATP. Residues Tyr91 and 98–101 (GVDR) each bind substrate. Catalysis depends on Asp100, which acts as the Proton acceptor. Thr121 is an ATP binding site. Thr171 is a binding site for substrate.

This sequence belongs to the type III pantothenate kinase family. Homodimer. NH4(+) serves as cofactor. It depends on K(+) as a cofactor.

It is found in the cytoplasm. The catalysed reaction is (R)-pantothenate + ATP = (R)-4'-phosphopantothenate + ADP + H(+). It functions in the pathway cofactor biosynthesis; coenzyme A biosynthesis; CoA from (R)-pantothenate: step 1/5. Catalyzes the phosphorylation of pantothenate (Pan), the first step in CoA biosynthesis. This chain is Type III pantothenate kinase, found in Xanthomonas euvesicatoria pv. vesicatoria (strain 85-10) (Xanthomonas campestris pv. vesicatoria).